The primary structure comprises 528 residues: Probable serine protease HtrA1 (528 aa).

Residues 1-70 form a disordered region; sequence MDTRVDTDNA…RPSGVQGSFV (70 aa). Over 1–178 the chain is Cytoplasmic; the sequence is MDTRVDTDNA…DVLFGGKVSY (178 aa). Gly residues predominate over residues 31–40; it reads NNGGPNGGGR. The helical transmembrane segment at 179 to 199 threads the bilayer; sequence LALGILVAIALVIGGIGGVIG. The Periplasmic portion of the chain corresponds to 200–528; sequence RKTAEVVDAF…LTVKPDPDST (329 aa). Residues His270, Asp306, and Ser387 each act as charge relay system in the active site. Residues 426–487 enclose the PDZ domain; sequence LVANSLIKDG…VIVKVGNRAV (62 aa).

The protein belongs to the peptidase S1C family. The C-terminal region exhibits both monomeric and trimeric forms in solution.

It localises to the cell inner membrane. The enzyme catalyses Acts on substrates that are at least partially unfolded. The cleavage site P1 residue is normally between a pair of hydrophobic residues, such as Val-|-Val.. In terms of biological role, essential protein that may act as a regulatory protease that is conditionally activated upon appropriate environmental triggers. This is Probable serine protease HtrA1 from Mycobacterium tuberculosis (strain ATCC 25618 / H37Rv).